A 73-amino-acid chain; its full sequence is MDEKRFLKRFTESDLVPQPRSRFLRVECVDCGNEQIIFGNASTEVKCHICGRTLAKPTGGKAKILTKIKEVLE.

Residues cysteine 28, cysteine 31, cysteine 47, and cysteine 50 each contribute to the Zn(2+) site. The C4-type zinc finger occupies 28-50 (CVDCGNEQIIFGNASTEVKCHIC).

The protein belongs to the eukaryotic ribosomal protein eS27 family. As to quaternary structure, part of the 30S ribosomal subunit. Requires Zn(2+) as cofactor.

This chain is Small ribosomal subunit protein eS27, found in Methanopyrus kandleri (strain AV19 / DSM 6324 / JCM 9639 / NBRC 100938).